The following is a 586-amino-acid chain: Scavenger receptor cysteine-rich domain-containing group B protein (586 aa).

Residues 1–33 are disordered; the sequence is MGPSERPSIGWTPKEAEMQIGPQPDGWSRGWKP. A signal peptide spans 1 to 58; sequence MGPSERPSIGWTPKEAEMQIGPQPDGWSRGWKPGDRGAVPLPLSPALSFLLLFPLASA. 4 SRCR domains span residues 69 to 169, 200 to 300, 355 to 455, and 484 to 584; these read LRLV…VLCD, VRLV…VLCA, LRLV…ALCA, and LRLA…VLCQ. 12 cysteine pairs are disulfide-bonded: C94–C158, C107–C168, C138–C148, C225–C289, C238–C299, C269–C279, C380–C444, C393–C454, C424–C434, C509–C573, C522–C583, and C553–C563.

The protein localises to the secreted. This is Scavenger receptor cysteine-rich domain-containing group B protein from Mus musculus (Mouse).